We begin with the raw amino-acid sequence, 298 residues long: Putative insertion sequence ATP-binding protein y4iQ/y4nD/y4sD (298 aa).

114 to 121 (GPPGGGKS) contacts ATP. The interval 276–298 (RQSEHDETLASDNQHDTFMPTAT) is disordered.

The protein belongs to the IS21/IS1162 putative ATP-binding protein family.

This Sinorhizobium fredii (strain NBRC 101917 / NGR234) protein is Putative insertion sequence ATP-binding protein y4iQ/y4nD/y4sD.